A 398-amino-acid polypeptide reads, in one-letter code: Dual-specificity RNA methyltransferase RlmN (398 aa).

E119 serves as the catalytic Proton acceptor. The Radical SAM core domain maps to 125 to 364 (DGDRATLCVS…TIVRKTRGDD (240 aa)). A disulfide bridge links C132 with C369. 3 residues coordinate [4Fe-4S] cluster: C139, C143, and C146. Residues 193–194 (GE), S225, 247–249 (SLH), and N326 each bind S-adenosyl-L-methionine. C369 (S-methylcysteine intermediate) is an active-site residue.

The protein belongs to the radical SAM superfamily. RlmN family. The cofactor is [4Fe-4S] cluster.

It is found in the cytoplasm. The catalysed reaction is adenosine(2503) in 23S rRNA + 2 reduced [2Fe-2S]-[ferredoxin] + 2 S-adenosyl-L-methionine = 2-methyladenosine(2503) in 23S rRNA + 5'-deoxyadenosine + L-methionine + 2 oxidized [2Fe-2S]-[ferredoxin] + S-adenosyl-L-homocysteine. It carries out the reaction adenosine(37) in tRNA + 2 reduced [2Fe-2S]-[ferredoxin] + 2 S-adenosyl-L-methionine = 2-methyladenosine(37) in tRNA + 5'-deoxyadenosine + L-methionine + 2 oxidized [2Fe-2S]-[ferredoxin] + S-adenosyl-L-homocysteine. Specifically methylates position 2 of adenine 2503 in 23S rRNA and position 2 of adenine 37 in tRNAs. m2A2503 modification seems to play a crucial role in the proofreading step occurring at the peptidyl transferase center and thus would serve to optimize ribosomal fidelity. The polypeptide is Dual-specificity RNA methyltransferase RlmN (Serratia proteamaculans (strain 568)).